Reading from the N-terminus, the 667-residue chain is MESMGRQDRRLHQQLKESSSRFQTLMKRLIAKYNQPFEDDPLVEMRTLTYETPQGLRVWGGKLMKKEDKEYTQVIDRLNGQAPEGDSESSGADTSLEENWPSCSSAMREASGDPRQRQPAVPGNTLETDLRRKYLTQVDILPQDEEYFKNAEKRGGKDTVMTWVPSVTSSVTPASGCQDAISAKSSGGPEVSALSSRGQGPSYPCPADMAIVARSDGLSLLGTSSNSVSSQSFEVDDLCNVTISDLYEGMMHSMSRLLRSKPSCIISTKTYINQSWKLRRRPSRKQGLHKNRTHCPRSKPSQRSARKGPASCSEPGKEAGILRDYGNLLHVAPHKTGLELKSVSLEGSKRQVHKSSPAWKELQMMPQKDLDLNRERENRVMTLQWLISPVKVVPRPRMLPSQVEKWYREIKIKFDKLHQEYCLSSGKQPRLTDPTESWAVDVYRSGSKSPGSRQDVETCRPSSPFGREKTERPGEALEDLRGNGKSVKTKSCLLRSCPSPEGSPSRSPSHSQLSSGLQEHNSEPTGKAVWPSTAISAPSIGSPGCGKDNYYELKKEFNRLYQKYCLSPQRAKVTSCGRVSPMKAAAALPCQSEHLKRLNPDSPQQSSQKRSISPGCHRRVLQDSTAQTASTLVRDSWLPTKRCKLSYPVACAHQAKFHDTSGASGWP.

Positions 78-126 are disordered; that stretch reads LNGQAPEGDSESSGADTSLEENWPSCSSAMREASGDPRQRQPAVPGNTL. Residues S169, S185, and S195 each carry the phosphoserine modification. 2 disordered regions span residues 181–201 and 279–317; these read ISAK…GQGP and RRRP…EPGK. Over residues 279–297 the composition is skewed to basic residues; it reads RRRPSRKQGLHKNRTHCPR. S388, S424, S449, and S462 each carry phosphoserine. A disordered region spans residues 443 to 530; sequence YRSGSKSPGS…NSEPTGKAVW (88 aa). Basic and acidic residues predominate over residues 466 to 482; it reads GREKTERPGEALEDLRG. Low complexity predominate over residues 496 to 515; sequence SCPSPEGSPSRSPSHSQLSS. A Glycyl lysine isopeptide (Lys-Gly) (interchain with G-Cter in SUMO2) cross-link involves residue K554. S567 carries the phosphoserine modification. Residues 596-617 form a disordered region; the sequence is KRLNPDSPQQSSQKRSISPGCH. Residues 601–611 are compositionally biased toward polar residues; it reads DSPQQSSQKRS. A Phosphoserine modification is found at S613.

As to quaternary structure, interacts with CENPA (via CATD domain); the interaction is direct and specific for CENPA since it does not interact with H3.1- or H3.3-containing nucleosomes. Heterotrimer composed of HJURP, CENPA and histone H4, where HJURP interacts with the dimer formed by CENPA and histone H4 and prevents tetramerization of CENPA and H4. Identified in a centromere complex containing histones H2A, H2B and H4, and at least CENPA, CENPB, CENPC, CENPT, CENPN, HJURP, SUPT16H, SSRP1 and RSF1. Interacts with 14-3-3 family members in a phosphorylation-dependent manner. Interacts with MSH5 and NBN.

The protein resides in the nucleus. It is found in the nucleolus. Its subcellular location is the chromosome. It localises to the centromere. Functionally, centromeric protein that plays a central role in the incorporation and maintenance of histone H3-like variant CENPA at centromeres. Acts as a specific chaperone for CENPA and is required for the incorporation of newly synthesized CENPA molecules into nucleosomes at replicated centromeres. Prevents CENPA-H4 tetramerization and prevents premature DNA binding by the CENPA-H4 tetramer. Directly binds Holliday junctions. In Mus musculus (Mouse), this protein is Holliday junction recognition protein (Hjurp).